A 224-amino-acid polypeptide reads, in one-letter code: Large ribosomal subunit protein bL25 (224 aa).

The disordered stretch occupies residues 196–224; the sequence is VEEVDTDAEEVDAADVPATEQGSEEDKGE. Acidic residues predominate over residues 197–208; the sequence is EEVDTDAEEVDA.

The protein belongs to the bacterial ribosomal protein bL25 family. CTC subfamily. Part of the 50S ribosomal subunit; part of the 5S rRNA/L5/L18/L25 subcomplex. Contacts the 5S rRNA. Binds to the 5S rRNA independently of L5 and L18.

Its function is as follows. This is one of the proteins that binds to the 5S RNA in the ribosome where it forms part of the central protuberance. This is Large ribosomal subunit protein bL25 from Psychrobacter sp. (strain PRwf-1).